The chain runs to 33 residues: SLFSLIKAGAKFLGKNLLKQGACYAACKASKQC.

C27 and C33 are disulfide-bonded.

It belongs to the frog skin active peptide (FSAP) family. Brevinin subfamily. As to quaternary structure, monomer. As to expression, expressed by the skin glands.

The protein localises to the secreted. Its function is as follows. Has a non-hemolytic activity. Has a broad spectrum of activity against both Gram-positive and Gram-negative bacteria, fungi and protozoa. This chain is Gaegurin-1 (GGN1), found in Glandirana rugosa (Japanese wrinkled frog).